A 79-amino-acid polypeptide reads, in one-letter code: Probable [Fe-S]-dependent transcriptional repressor (79 aa).

4 residues coordinate iron-sulfur cluster: Cys-56, Cys-61, Cys-64, and Cys-70.

This sequence belongs to the FeoC family.

In terms of biological role, may function as a transcriptional regulator that controls feoABC expression. The protein is Probable [Fe-S]-dependent transcriptional repressor of Serratia proteamaculans (strain 568).